The sequence spans 432 residues: Adenylosuccinate synthetase (432 aa).

GTP contacts are provided by residues 12–18 and 40–42; these read GDEGKGK and GHT. Asp13 functions as the Proton acceptor in the catalytic mechanism. Mg(2+) is bound by residues Asp13 and Gly40. IMP contacts are provided by residues 13–16, 38–41, Thr132, Arg146, Gln226, Thr241, and Arg305; these read DEGK and NAGH. Residue His41 is the Proton donor of the active site. 301–307 serves as a coordination point for substrate; the sequence is TVTGRKR. GTP contacts are provided by residues Arg307, 333-335, and 415-417; these read KLD and STS.

This sequence belongs to the adenylosuccinate synthetase family. As to quaternary structure, homodimer. Requires Mg(2+) as cofactor.

The protein localises to the cytoplasm. The enzyme catalyses IMP + L-aspartate + GTP = N(6)-(1,2-dicarboxyethyl)-AMP + GDP + phosphate + 2 H(+). It functions in the pathway purine metabolism; AMP biosynthesis via de novo pathway; AMP from IMP: step 1/2. In terms of biological role, plays an important role in the de novo pathway of purine nucleotide biosynthesis. Catalyzes the first committed step in the biosynthesis of AMP from IMP. In Allorhizobium ampelinum (strain ATCC BAA-846 / DSM 112012 / S4) (Agrobacterium vitis (strain S4)), this protein is Adenylosuccinate synthetase.